A 135-amino-acid chain; its full sequence is Holo-[acyl-carrier-protein] synthase (135 aa).

D9 and E63 together coordinate Mg(2+).

This sequence belongs to the P-Pant transferase superfamily. AcpS family. Mg(2+) is required as a cofactor.

It is found in the cytoplasm. It carries out the reaction apo-[ACP] + CoA = holo-[ACP] + adenosine 3',5'-bisphosphate + H(+). Transfers the 4'-phosphopantetheine moiety from coenzyme A to a Ser of acyl-carrier-protein. This is Holo-[acyl-carrier-protein] synthase from Paraburkholderia phymatum (strain DSM 17167 / CIP 108236 / LMG 21445 / STM815) (Burkholderia phymatum).